A 208-amino-acid chain; its full sequence is MSNEFDYLFKLLLIGDSSVGKSCFLLRFADDSYVDSYISTIGVDFKIRTVEVEGKTVKLQIWDTAGQERFRTITSSYYRGAHGIIIVYDITDMESFNNVKQWLDEIDRYANDSVRKLLVGNKCDLAENRAVDTSVAQAYAQEVGIPFLETSAKESINVEEAFLAMSAAIKKSKAGSQAALERKPSNVVQMKGRPIQQEQQKSSRCCST.

GTP contacts are provided by residues 15–23 (GDSSVGKSC), 33–40 (YVDSYIST), 63–67 (DTAGQ), 121–124 (NKCD), and 151–153 (SAK). Residues 37–45 (YISTIGVDF) carry the Effector region motif. The interval 189 to 208 (QMKGRPIQQEQQKSSRCCST) is disordered. The span at 196–208 (QQEQQKSSRCCST) shows a compositional bias: polar residues. 2 S-geranylgeranyl cysteine lipidation sites follow: Cys205 and Cys206.

It belongs to the small GTPase superfamily. Rab family. In terms of tissue distribution, low levels in coleoptiles.

The protein resides in the cell membrane. Functionally, protein transport. Probably involved in vesicular traffic. The chain is GTP-binding protein YPTM1 (YPTM1) from Zea mays (Maize).